The following is a 323-amino-acid chain: MKTTFLDFEQPIAELEAKIEELRFVQDDSAVDISEEISRLAGKSQQLTKDIYANLTPWQVAQIARHPQRPYTLDYVREIFTDFHELHGDRTFADDLSIIGGLARFNGQACMVIGHQKGRDTKERAMRNFGMPKPEGYRKAKRLMELADKFGLPIFTFVDTPGAFPGIDAEERGQSEAIGHNLYVMAGLKVPLIATIIGEGGSGGALAIAVGDVVQMLQFATYAVISPEGCASILWKTAEKAPEAAEALGLTAHRLKALGLIDKIVSEPLGGAHRDYKGMAAMLKRSLAESLRQFQGMSVKELQARRYERLLAYGKFKETGTQD.

A CoA carboxyltransferase C-terminal domain is found at 39–293 (RLAGKSQQLT…KRSLAESLRQ (255 aa)).

It belongs to the AccA family. Acetyl-CoA carboxylase is a heterohexamer composed of biotin carboxyl carrier protein (AccB), biotin carboxylase (AccC) and two subunits each of ACCase subunit alpha (AccA) and ACCase subunit beta (AccD).

The protein localises to the cytoplasm. The enzyme catalyses N(6)-carboxybiotinyl-L-lysyl-[protein] + acetyl-CoA = N(6)-biotinyl-L-lysyl-[protein] + malonyl-CoA. Its pathway is lipid metabolism; malonyl-CoA biosynthesis; malonyl-CoA from acetyl-CoA: step 1/1. In terms of biological role, component of the acetyl coenzyme A carboxylase (ACC) complex. First, biotin carboxylase catalyzes the carboxylation of biotin on its carrier protein (BCCP) and then the CO(2) group is transferred by the carboxyltransferase to acetyl-CoA to form malonyl-CoA. This Cupriavidus necator (strain ATCC 17699 / DSM 428 / KCTC 22496 / NCIMB 10442 / H16 / Stanier 337) (Ralstonia eutropha) protein is Acetyl-coenzyme A carboxylase carboxyl transferase subunit alpha.